Reading from the N-terminus, the 222-residue chain is MAGQISPTRSALLASKASLKTATSGADLLKRKRDALIGEFFALVKDALAAREQLAGVSKGAYTSLFGAKAWDSPEAVESLSLAGTSDYAVDMQIESIYGVKVPRIKIPERQAAAAFSPINVGARTIQAATDFGTVLEAIVRVAATETKLRRIGEEIKKTSRRVNALEQVVIPGIRDDIRFIRGVLDQREREESFRLKKIKAKLEREKNKENAQAGQHGSAAD.

It belongs to the V-ATPase D subunit family.

Its function is as follows. Produces ATP from ADP in the presence of a proton gradient across the membrane. This Deinococcus geothermalis (strain DSM 11300 / CIP 105573 / AG-3a) protein is V-type ATP synthase subunit D.